Reading from the N-terminus, the 120-residue chain is Ribonuclease P protein component (120 aa).

This sequence belongs to the RnpA family. Consists of a catalytic RNA component (M1 or rnpB) and a protein subunit.

The catalysed reaction is Endonucleolytic cleavage of RNA, removing 5'-extranucleotides from tRNA precursor.. RNaseP catalyzes the removal of the 5'-leader sequence from pre-tRNA to produce the mature 5'-terminus. It can also cleave other RNA substrates such as 4.5S RNA. The protein component plays an auxiliary but essential role in vivo by binding to the 5'-leader sequence and broadening the substrate specificity of the ribozyme. This Chlamydia trachomatis serovar L2 (strain ATCC VR-902B / DSM 19102 / 434/Bu) protein is Ribonuclease P protein component.